Consider the following 416-residue polypeptide: Casein kinase I isoform epsilon (416 aa).

In terms of domain architecture, Protein kinase spans 9–277; the sequence is YRLGRKIGSG…YLRQLFRNLF (269 aa). ATP is bound by residues 15-23 and lysine 38; that span reads IGSGSFGDI. Aspartate 128 serves as the catalytic Proton acceptor. Positions 301-318 are enriched in basic and acidic residues; the sequence is PEDMDRERREHEREERMG. A disordered region spans residues 301–416; it reads PEDMDRERRE…TSVPFDHLGK (116 aa). Positions 324-338 are enriched in low complexity; that stretch reads ATRALPPGPPAGATG. Composition is skewed to polar residues over residues 350–365 and 400–409; these read STPT…TSPR and SRISASQTSV.

Belongs to the protein kinase superfamily. CK1 Ser/Thr protein kinase family. Casein kinase I subfamily. Monomer. Component of the circadian core oscillator, which includes the CRY proteins, CLOCK, or NPAS2, BMAL1 or BMAL2, CSNK1E, and the PER proteins.

It is found in the cytoplasm. The catalysed reaction is L-seryl-[protein] + ATP = O-phospho-L-seryl-[protein] + ADP + H(+). It catalyses the reaction L-threonyl-[protein] + ATP = O-phospho-L-threonyl-[protein] + ADP + H(+). Functionally, casein kinases are operationally defined by their preferential utilization of acidic proteins such as caseins as substrates. Can phosphorylate a large number of proteins. Participates in Wnt signaling. Phosphorylates DVL1. Central component of the circadian clock. May act as a negative regulator of circadian rhythmicity by phosphorylating PER1 and PER2. Retains PER1 in the cytoplasm. This chain is Casein kinase I isoform epsilon (CSNK1E), found in Gallus gallus (Chicken).